Consider the following 241-residue polypeptide: Triosephosphate isomerase (241 aa).

A substrate-binding site is contributed by 9 to 11; sequence NWK. The active-site Electrophile is H96. The Proton acceptor role is filled by E165. Substrate contacts are provided by residues G171, S204, and 225–226; that span reads GG.

It belongs to the triosephosphate isomerase family. Homodimer.

Its subcellular location is the cytoplasm. It catalyses the reaction D-glyceraldehyde 3-phosphate = dihydroxyacetone phosphate. It participates in carbohydrate biosynthesis; gluconeogenesis. It functions in the pathway carbohydrate degradation; glycolysis; D-glyceraldehyde 3-phosphate from glycerone phosphate: step 1/1. Its function is as follows. Involved in the gluconeogenesis. Catalyzes stereospecifically the conversion of dihydroxyacetone phosphate (DHAP) to D-glyceraldehyde-3-phosphate (G3P). This is Triosephosphate isomerase from Trichormus variabilis (strain ATCC 29413 / PCC 7937) (Anabaena variabilis).